The primary structure comprises 212 residues: Regulatory protein RecX (212 aa).

Belongs to the RecX family.

It is found in the cytoplasm. In terms of biological role, modulates RecA activity. In Clostridium perfringens (strain SM101 / Type A), this protein is Regulatory protein RecX.